We begin with the raw amino-acid sequence, 125 residues long: Large ribosomal subunit protein bL12 (125 aa).

Belongs to the bacterial ribosomal protein bL12 family. As to quaternary structure, homodimer. Part of the ribosomal stalk of the 50S ribosomal subunit. Forms a multimeric L10(L12)X complex, where L10 forms an elongated spine to which 2 to 4 L12 dimers bind in a sequential fashion. Binds GTP-bound translation factors.

Its function is as follows. Forms part of the ribosomal stalk which helps the ribosome interact with GTP-bound translation factors. Is thus essential for accurate translation. In Granulibacter bethesdensis (strain ATCC BAA-1260 / CGDNIH1), this protein is Large ribosomal subunit protein bL12.